Here is a 466-residue protein sequence, read N- to C-terminus: Cysteine--tRNA ligase (466 aa).

C28 is a binding site for Zn(2+). Positions P30–N40 match the 'HIGH' region motif. Residues C208, H233, and E237 each coordinate Zn(2+). Residues K265–S269 carry the 'KMSKS' region motif. An ATP-binding site is contributed by K268.

It belongs to the class-I aminoacyl-tRNA synthetase family. As to quaternary structure, monomer. Zn(2+) serves as cofactor.

The protein localises to the cytoplasm. The catalysed reaction is tRNA(Cys) + L-cysteine + ATP = L-cysteinyl-tRNA(Cys) + AMP + diphosphate. This Staphylococcus aureus (strain MSSA476) protein is Cysteine--tRNA ligase.